The following is a 145-amino-acid chain: Probable transport accessory protein MmpS2 (145 aa).

The chain crosses the membrane as a helical span at residues 11–31 (MWLLLAIVVVAVVGGLGIYRL).

The protein belongs to the MmpS family.

It localises to the cell membrane. The polypeptide is Probable transport accessory protein MmpS2 (mmpS2) (Mycobacterium bovis (strain ATCC BAA-935 / AF2122/97)).